Here is a 429-residue protein sequence, read N- to C-terminus: 4-hydroxyphenylacetate degradation bifunctional isomerase/decarboxylase (429 aa).

Approximate repeat units follow at residues 1–215 (MKGT…RKSF) and 216–429 (PTLP…ETAK). 3 residues coordinate a divalent metal cation: glutamate 276, glutamate 278, and aspartate 307.

This sequence belongs to the FAH family. Monomer. Requires Mg(2+) as cofactor.

The enzyme catalyses (2E,4Z)-5-hydroxypenta-2,4-diene-1,2,5-tricarboxylate = (3E,5R)-5-carboxy-2-oxohept-3-enedioate. The catalysed reaction is (3E,5R)-5-carboxy-2-oxohept-3-enedioate + H(+) = (4Z)-2-oxohept-4-enedioate + CO2. It participates in aromatic compound metabolism; 4-hydroxyphenylacetate degradation; pyruvate and succinate semialdehyde from 4-hydroxyphenylacetate: step 4/7. It functions in the pathway aromatic compound metabolism; 4-hydroxyphenylacetate degradation; pyruvate and succinate semialdehyde from 4-hydroxyphenylacetate: step 5/7. In terms of biological role, decarboxylates OPET (5-oxo-pent-3-ene-1,2,5-tricarboxylic acid) into HHDD (2-hydroxy-hept-2,4-diene-1,7-dioate) and isomerizes it to OHED (2-oxo-hept-3-ene-1,7-dioate). The chain is 4-hydroxyphenylacetate degradation bifunctional isomerase/decarboxylase (hpaG) from Escherichia coli.